Here is a 239-residue protein sequence, read N- to C-terminus: Protein NtpR (239 aa).

Positions 12-239 (LIRATDTFQG…GLFDFFVQEF (228 aa)) constitute a Glutamine amidotransferase type-1 domain. C113 acts as the Nucleophile in catalysis. Catalysis depends on residues H217 and E219.

This is Protein NtpR (ntpR) from Enterococcus hirae (strain ATCC 9790 / DSM 20160 / JCM 8729 / LMG 6399 / NBRC 3181 / NCIMB 6459 / NCDO 1258 / NCTC 12367 / WDCM 00089 / R).